Consider the following 335-residue polypeptide: Acetyl-coenzyme A carboxylase carboxyl transferase subunit alpha (335 aa).

One can recognise a CoA carboxyltransferase C-terminal domain in the interval 40–294 (QLETLAARRR…KEAIEKHLNA (255 aa)).

Belongs to the AccA family. In terms of assembly, acetyl-CoA carboxylase is a heterohexamer composed of biotin carboxyl carrier protein (AccB), biotin carboxylase (AccC) and two subunits each of ACCase subunit alpha (AccA) and ACCase subunit beta (AccD).

It is found in the cytoplasm. The enzyme catalyses N(6)-carboxybiotinyl-L-lysyl-[protein] + acetyl-CoA = N(6)-biotinyl-L-lysyl-[protein] + malonyl-CoA. Its pathway is lipid metabolism; malonyl-CoA biosynthesis; malonyl-CoA from acetyl-CoA: step 1/1. In terms of biological role, component of the acetyl coenzyme A carboxylase (ACC) complex. First, biotin carboxylase catalyzes the carboxylation of biotin on its carrier protein (BCCP) and then the CO(2) group is transferred by the carboxyltransferase to acetyl-CoA to form malonyl-CoA. The sequence is that of Acetyl-coenzyme A carboxylase carboxyl transferase subunit alpha from Prochlorococcus marinus (strain MIT 9215).